A 161-amino-acid chain; its full sequence is uncharacterized protein (161 aa).

Residues 1-29 (MTLYDTVKELQEKLRNGEIEINTFLERLG) adopt a coiled-coil conformation.

This is an uncharacterized protein from Acidianus convivator (ATV).